We begin with the raw amino-acid sequence, 282 residues long: Eukaryotic translation initiation factor 3 subunit G (282 aa).

The interval 1-27 (MSSSKSLDWADDEDYGTGLPSIQTFDN) is disordered. A phosphoserine mark is found at S160 and S164. The RRM domain occupies 202 to 280 (ATLRVTNLSD…LILRCEFSKP (79 aa)).

The protein belongs to the eIF-3 subunit G family. In terms of assembly, component of the eukaryotic translation initiation factor 3 (eIF-3) complex. The eIF-3 complex appears to include tif32/eif3a, SPAC25G10.08/eif3b, tif33/eif3c, SPBC4C3.07/eif3f, tif35/eif3g and sum1/eif3i. This set of common subunits may also associate exclusively with either moe1/eif3d and int6/eif3e, or with SPAC821.05/eif3h and SPAC1751.03/eif3m. The eIF-3 complex may also include SPAC3A12.13c/eif3j.

The protein resides in the cytoplasm. RNA-binding component of the eukaryotic translation initiation factor 3 (eIF-3) complex, which is involved in protein synthesis of a specialized repertoire of mRNAs and, together with other initiation factors, stimulates binding of mRNA and methionyl-tRNAi to the 40S ribosome. The eIF-3 complex specifically targets and initiates translation of a subset of mRNAs involved in cell proliferation. This subunit can bind 18S rRNA. The chain is Eukaryotic translation initiation factor 3 subunit G (tif35) from Schizosaccharomyces pombe (strain 972 / ATCC 24843) (Fission yeast).